The primary structure comprises 521 residues: DEAD-box ATP-dependent RNA helicase 1 (521 aa).

Positions 1–20 (MVVAMATKEEEGGPSSRVPH) are disordered. The short motif at 36 to 65 (CPVAHLPRLDPRLVKPLQRMGIESFFPVQV) is the Q motif element. The 231-residue stretch at 72–302 (IGPGAFERDI…QLELQHPLLL (231 aa)) folds into the Helicase ATP-binding domain. 85–92 (SPTGSGKT) is a binding site for ATP. A DEAD box motif is present at residues 213 to 216 (DETD). The region spanning 330–480 (SLIVLLQELR…SLPEESVETL (151 aa)) is the Helicase C-terminal domain. Positions 495–507 (LESEATKKSKSGD) are enriched in basic and acidic residues. The segment at 495–521 (LESEATKKSKSGDKAPNASKRKRTINT) is disordered.

The protein belongs to the DEAD box helicase family. DDX51/DBP6 subfamily.

It carries out the reaction ATP + H2O = ADP + phosphate + H(+). This chain is DEAD-box ATP-dependent RNA helicase 1, found in Oryza sativa subsp. japonica (Rice).